The primary structure comprises 262 residues: Tryptophan synthase alpha chain (262 aa).

Residues glutamate 48 and aspartate 59 each act as proton acceptor in the active site.

It belongs to the TrpA family. Tetramer of two alpha and two beta chains.

The catalysed reaction is (1S,2R)-1-C-(indol-3-yl)glycerol 3-phosphate + L-serine = D-glyceraldehyde 3-phosphate + L-tryptophan + H2O. It participates in amino-acid biosynthesis; L-tryptophan biosynthesis; L-tryptophan from chorismate: step 5/5. Functionally, the alpha subunit is responsible for the aldol cleavage of indoleglycerol phosphate to indole and glyceraldehyde 3-phosphate. In Helicobacter pylori (strain G27), this protein is Tryptophan synthase alpha chain.